A 262-amino-acid polypeptide reads, in one-letter code: Phosphatidylserine decarboxylase proenzyme (262 aa).

Residues Asp-86, His-142, and Ser-226 each act as charge relay system; for autoendoproteolytic cleavage activity in the active site. Ser-226 (schiff-base intermediate with substrate; via pyruvic acid; for decarboxylase activity) is an active-site residue. Ser-226 is modified (pyruvic acid (Ser); by autocatalysis).

Belongs to the phosphatidylserine decarboxylase family. PSD-B subfamily. Prokaryotic type I sub-subfamily. In terms of assembly, heterodimer of a large membrane-associated beta subunit and a small pyruvoyl-containing alpha subunit. Requires pyruvate as cofactor. Is synthesized initially as an inactive proenzyme. Formation of the active enzyme involves a self-maturation process in which the active site pyruvoyl group is generated from an internal serine residue via an autocatalytic post-translational modification. Two non-identical subunits are generated from the proenzyme in this reaction, and the pyruvate is formed at the N-terminus of the alpha chain, which is derived from the carboxyl end of the proenzyme. The autoendoproteolytic cleavage occurs by a canonical serine protease mechanism, in which the side chain hydroxyl group of the serine supplies its oxygen atom to form the C-terminus of the beta chain, while the remainder of the serine residue undergoes an oxidative deamination to produce ammonia and the pyruvoyl prosthetic group on the alpha chain. During this reaction, the Ser that is part of the protease active site of the proenzyme becomes the pyruvoyl prosthetic group, which constitutes an essential element of the active site of the mature decarboxylase.

The protein resides in the cell membrane. It carries out the reaction a 1,2-diacyl-sn-glycero-3-phospho-L-serine + H(+) = a 1,2-diacyl-sn-glycero-3-phosphoethanolamine + CO2. Its pathway is phospholipid metabolism; phosphatidylethanolamine biosynthesis; phosphatidylethanolamine from CDP-diacylglycerol: step 2/2. Functionally, catalyzes the formation of phosphatidylethanolamine (PtdEtn) from phosphatidylserine (PtdSer). The sequence is that of Phosphatidylserine decarboxylase proenzyme from Bacillus thuringiensis subsp. konkukian (strain 97-27).